A 507-amino-acid polypeptide reads, in one-letter code: ATP synthase subunit alpha (507 aa).

The tract at residues 118 to 141 (VDGLGPIETTETRPIESPAPGVMD) is disordered. 172–179 (GDRQTGKT) serves as a coordination point for ATP.

It belongs to the ATPase alpha/beta chains family. F-type ATPases have 2 components, CF(1) - the catalytic core - and CF(0) - the membrane proton channel. CF(1) has five subunits: alpha(3), beta(3), gamma(1), delta(1), epsilon(1). CF(0) has three main subunits: a(1), b(2) and c(9-12). The alpha and beta chains form an alternating ring which encloses part of the gamma chain. CF(1) is attached to CF(0) by a central stalk formed by the gamma and epsilon chains, while a peripheral stalk is formed by the delta and b chains.

It localises to the cell membrane. The catalysed reaction is ATP + H2O + 4 H(+)(in) = ADP + phosphate + 5 H(+)(out). Produces ATP from ADP in the presence of a proton gradient across the membrane. The alpha chain is a regulatory subunit. This chain is ATP synthase subunit alpha, found in Anoxybacillus flavithermus (strain DSM 21510 / WK1).